The sequence spans 393 residues: Heparan sulfate glucosamine 3-O-sulfotransferase 3A1 (393 aa).

Topologically, residues 1–24 are cytoplasmic; sequence MAPSGPTGAQPSPAEPLSRSIFRK. The helical; Signal-anchor for type II membrane protein transmembrane segment at 25–43 threads the bilayer; that stretch reads FLLMLCSLLTSLYVFYCLA. Residues 44–393 lie on the Lumenal side of the membrane; sequence ERCPPGSGPV…MTGRDFGWDG (350 aa). Residues 85–121 form a disordered region; sequence QRRRRGRSGPGDSSDQEEQSPGLAAAPGGSGAGSSVA. Position 149-153 (149-153) interacts with 3'-phosphoadenylyl sulfate; sequence KGGTR. Residues 171 to 177 and 202 to 205 each bind substrate; these read EPHFFDR and KTPS. Arg-230 and Ser-238 together coordinate 3'-phosphoadenylyl sulfate. Asn-260 carries an N-linked (GlcNAc...) asparagine glycan. 270–271 contributes to the substrate binding site; it reads WS. N-linked (GlcNAc...) asparagine glycosylation occurs at Asn-331. The cysteines at positions 338 and 350 are disulfide-linked. Position 355–359 (355–359) interacts with 3'-phosphoadenylyl sulfate; the sequence is KGRAH.

The protein belongs to the sulfotransferase 1 family.

It is found in the golgi apparatus membrane. The enzyme catalyses alpha-D-glucosaminyl-[heparan sulfate](n) + 3'-phosphoadenylyl sulfate = 3-sulfo-alpha-D-glucosaminyl-[heparan sulfate](n) + adenosine 3',5'-bisphosphate + H(+). Sulfotransferase that utilizes 3'-phospho-5'-adenylyl sulfate (PAPS) to catalyze the transfer of a sulfo group to an N-unsubstituted glucosamine linked to a 2-O-sulfo iduronic acid unit on heparan sulfate. Catalyzes the O-sulfation of glucosamine in IdoUA2S-GlcNS and also in IdoUA2S-GlcNH2. Unlike HS3ST1/3-OST-1, does not convert non-anticoagulant heparan sulfate to anticoagulant heparan sulfate. This chain is Heparan sulfate glucosamine 3-O-sulfotransferase 3A1 (Hs3st3a1), found in Mus musculus (Mouse).